A 153-amino-acid chain; its full sequence is Large ribosomal subunit protein bL9 (153 aa).

Belongs to the bacterial ribosomal protein bL9 family.

Functionally, binds to the 23S rRNA. This chain is Large ribosomal subunit protein bL9, found in Tropheryma whipplei (strain Twist) (Whipple's bacillus).